The primary structure comprises 85 residues: Small ribosomal subunit protein eS21 (85 aa).

Belongs to the eukaryotic ribosomal protein eS21 family. As to quaternary structure, component of the 40S small ribosomal subunit.

The protein localises to the cytoplasm. It localises to the cytosol. The protein resides in the rough endoplasmic reticulum. This is Small ribosomal subunit protein eS21 (RPS21) from Branchiostoma belcheri (Amphioxus).